We begin with the raw amino-acid sequence, 514 residues long: Cardiolipin synthase 2 (514 aa).

3 consecutive transmembrane segments (helical) span residues 7–27, 41–61, and 71–91; these read LIFF…FIDV, ILGI…CVIF, and LTWL…YLLF. 2 PLD phosphodiesterase domains span residues 249–276 and 427–454; these read INYR…GDEY and EKGF…DMRS. Catalysis depends on residues His-254, Lys-256, Asp-261, His-432, Lys-434, and Asp-439.

Belongs to the phospholipase D family. Cardiolipin synthase subfamily.

Its subcellular location is the cell membrane. The catalysed reaction is 2 a 1,2-diacyl-sn-glycero-3-phospho-(1'-sn-glycerol) = a cardiolipin + glycerol. In terms of biological role, catalyzes the reversible phosphatidyl group transfer from one phosphatidylglycerol molecule to another to form cardiolipin (CL) (diphosphatidylglycerol) and glycerol. The sequence is that of Cardiolipin synthase 2 (cls2) from Bacillus cereus (strain ATCC 14579 / DSM 31 / CCUG 7414 / JCM 2152 / NBRC 15305 / NCIMB 9373 / NCTC 2599 / NRRL B-3711).